Here is a 350-residue protein sequence, read N- to C-terminus: Palmitoyltransferase erf2 (350 aa).

Residues 1 to 86 (MSYEKHSDAK…RLQMSSQYKA (86 aa)) are Cytoplasmic-facing. The chain crosses the membrane as a helical span at residues 87-107 (FLISLFALILPGVLFFIFSAF). Over 108–112 (WLWHH) the chain is Lumenal. A helical transmembrane segment spans residues 113 to 133 (VSPAVPITFAYLYALAVVSMF). Residues 134–225 (KCSTADPGIL…NTCIGRRNYR (92 aa)) are Cytoplasmic-facing. The 51-residue stretch at 182 to 232 (VYCHTCHLYRPPRASHCHLCDNCVEYLDHHCIWLNTCIGRRNYRYYFIFLL) folds into the DHHC domain. Residue Cys212 is the S-palmitoyl cysteine intermediate of the active site. The helical transmembrane segment at 226-246 (YYFIFLLSVVLSALYLTGLGF) threads the bilayer. The Lumenal portion of the chain corresponds to 247-270 (YTSIGSFHESTDTNFAAHLRRPWA). Residues 271-291 (GVSFFLGIYGALGAILPGILF) traverse the membrane as a helical segment. At 292 to 350 (CYQCYLISVGQNVHEYLRAKSTETEDVHPFHDSIWLNFLVVLCRPKNVSYVRPTRKSYV) the chain is on the cytoplasmic side.

The protein belongs to the DHHC palmitoyltransferase family. ERF2/ZDHHC9 subfamily. As to quaternary structure, interacts with erf4. Autopalmitoylated.

The protein localises to the endoplasmic reticulum membrane. Its subcellular location is the golgi apparatus. It localises to the golgi stack membrane. It catalyses the reaction L-cysteinyl-[protein] + hexadecanoyl-CoA = S-hexadecanoyl-L-cysteinyl-[protein] + CoA. The erf2-erf4 complex is a palmitoyltransferase with a major role in driving sexual development. Palmitoylates ras1. Palmitoylates isp3. Palmitoylates rho3. This chain is Palmitoyltransferase erf2, found in Schizosaccharomyces pombe (strain 972 / ATCC 24843) (Fission yeast).